We begin with the raw amino-acid sequence, 329 residues long: Mitochondrial substrate carrier family protein Q (329 aa).

Solcar repeat units follow at residues 18 to 115, 125 to 206, and 216 to 310; these read VEAL…LKSI, LGTI…LRAL, and LGGL…VVIH. The next 6 membrane-spanning stretches (helical) occupy residues 21–41, 95–115, 131–151, 175–195, 221–241, and 298–318; these read LGHA…TYPF, LIGI…LKSI, LAIA…IWVV, GFGG…NPSV, VFIL…PYLL, and AFMF…LFYL.

This sequence belongs to the mitochondrial carrier (TC 2.A.29) family.

The protein localises to the peroxisome membrane. In terms of biological role, may have transport activity. The sequence is that of Mitochondrial substrate carrier family protein Q (mcfQ) from Dictyostelium discoideum (Social amoeba).